Consider the following 399-residue polypeptide: Phosphomevalonate dehydratase large subunit (399 aa).

Residues Gly-54, Val-55, Ser-56, Asn-85, and Pro-86 each coordinate (R)-5-phosphomevalonate. Residue Cys-125 participates in [4Fe-4S] cluster binding. (R)-5-phosphomevalonate contacts are provided by Glu-144 and Ser-145. 2 residues coordinate [4Fe-4S] cluster: Cys-298 and Cys-355. Lys-375 contacts (R)-5-phosphomevalonate.

Belongs to the AcnX type II large subunit family. In terms of assembly, heterodimer composed of a large subunit (PMDh-L) and a small subunit (PMDh-S). [4Fe-4S] cluster is required as a cofactor.

The enzyme catalyses (R)-5-phosphomevalonate = (2E)-3-methyl-5-phosphooxypent-2-enoate + H2O. Its pathway is isoprenoid biosynthesis; isopentenyl diphosphate biosynthesis via mevalonate pathway. In terms of biological role, component of a hydro-lyase that catalyzes the dehydration of mevalonate 5-phosphate (MVA5P) to form trans-anhydromevalonate 5-phosphate (tAHMP). Involved in the archaeal mevalonate (MVA) pathway, which provides fundamental precursors for isoprenoid biosynthesis, such as isopentenyl diphosphate (IPP) and dimethylallyl diphosphate (DMAPP). This is Phosphomevalonate dehydratase large subunit from Methanothermobacter thermautotrophicus (strain ATCC 29096 / DSM 1053 / JCM 10044 / NBRC 100330 / Delta H) (Methanobacterium thermoautotrophicum).